The following is a 227-amino-acid chain: Cytochrome c oxidase subunit 2 (227 aa).

Residues 1 to 14 (MAYPLQLGFQDATS) lie on the Mitochondrial intermembrane side of the membrane. The chain crosses the membrane as a helical span at residues 15–45 (PIMEELLHFHDHTLMIVFLISSLVLYIISLM). Over 46-59 (LTTKLTHTSTMDAQ) the chain is Mitochondrial matrix. Residues 60–87 (EVETIWTILPAIILILIALPSLRILYMM) form a helical membrane-spanning segment. At 88–227 (DEINNPSLTI…HFEKWSTSML (140 aa)) the chain is on the mitochondrial intermembrane side. 6 residues coordinate Cu cation: histidine 161, cysteine 196, glutamate 198, cysteine 200, histidine 204, and methionine 207. Mg(2+) is bound at residue glutamate 198.

This sequence belongs to the cytochrome c oxidase subunit 2 family. Component of the cytochrome c oxidase (complex IV, CIV), a multisubunit enzyme composed of 14 subunits. The complex is composed of a catalytic core of 3 subunits MT-CO1, MT-CO2 and MT-CO3, encoded in the mitochondrial DNA, and 11 supernumerary subunits COX4I, COX5A, COX5B, COX6A, COX6B, COX6C, COX7A, COX7B, COX7C, COX8 and NDUFA4, which are encoded in the nuclear genome. The complex exists as a monomer or a dimer and forms supercomplexes (SCs) in the inner mitochondrial membrane with NADH-ubiquinone oxidoreductase (complex I, CI) and ubiquinol-cytochrome c oxidoreductase (cytochrome b-c1 complex, complex III, CIII), resulting in different assemblies (supercomplex SCI(1)III(2)IV(1) and megacomplex MCI(2)III(2)IV(2)). Found in a complex with TMEM177, COA6, COX18, COX20, SCO1 and SCO2. Interacts with TMEM177 in a COX20-dependent manner. Interacts with COX20. Interacts with COX16. Cu cation is required as a cofactor.

It is found in the mitochondrion inner membrane. The enzyme catalyses 4 Fe(II)-[cytochrome c] + O2 + 8 H(+)(in) = 4 Fe(III)-[cytochrome c] + 2 H2O + 4 H(+)(out). Functionally, component of the cytochrome c oxidase, the last enzyme in the mitochondrial electron transport chain which drives oxidative phosphorylation. The respiratory chain contains 3 multisubunit complexes succinate dehydrogenase (complex II, CII), ubiquinol-cytochrome c oxidoreductase (cytochrome b-c1 complex, complex III, CIII) and cytochrome c oxidase (complex IV, CIV), that cooperate to transfer electrons derived from NADH and succinate to molecular oxygen, creating an electrochemical gradient over the inner membrane that drives transmembrane transport and the ATP synthase. Cytochrome c oxidase is the component of the respiratory chain that catalyzes the reduction of oxygen to water. Electrons originating from reduced cytochrome c in the intermembrane space (IMS) are transferred via the dinuclear copper A center (CU(A)) of subunit 2 and heme A of subunit 1 to the active site in subunit 1, a binuclear center (BNC) formed by heme A3 and copper B (CU(B)). The BNC reduces molecular oxygen to 2 water molecules using 4 electrons from cytochrome c in the IMS and 4 protons from the mitochondrial matrix. This chain is Cytochrome c oxidase subunit 2 (MT-CO2), found in Rhinoceros unicornis (Greater Indian rhinoceros).